Here is a 195-residue protein sequence, read N- to C-terminus: Heat shock protein beta-8 (195 aa).

Phosphoserine is present on S56. At T62 the chain carries Phosphothreonine. Asymmetric dimethylarginine is present on residues R70 and R77. The region spanning 73 to 184 (TATARFGVPA…TFGESSFNNE (112 aa)) is the sHSP domain. A disordered region spans residues 175–195 (TFGESSFNNELPQDSQEVTCT). The span at 176–195 (FGESSFNNELPQDSQEVTCT) shows a compositional bias: polar residues.

Belongs to the small heat shock protein (HSP20) family. Monomer. Forms a ternary complex with BAG3 and HSPA1A. Component of the chaperone-assisted selective autophagy (CASA) complex consisting of BAG3, HSPA8/HSC70, HSPB8 and STUB1/CHIP. Interacts with HSPB1. Interacts with DNAJB6. Interacts with BAG3. In terms of processing, phosphorylated.

Its subcellular location is the cytoplasm. It is found in the nucleus. In terms of biological role, involved in the chaperone-assisted selective autophagy (CASA), a crucial process for protein quality control, particularly in mechanical strained cells and tissues such as muscle. Displays temperature-dependent chaperone activity. The polypeptide is Heat shock protein beta-8 (HSPB8) (Macaca mulatta (Rhesus macaque)).